The following is a 319-amino-acid chain: Aspartate carbamoyltransferase catalytic subunit (319 aa).

Carbamoyl phosphate is bound by residues arginine 55 and threonine 56. An L-aspartate-binding site is contributed by lysine 83. Carbamoyl phosphate contacts are provided by arginine 105, histidine 144, and glutamine 147. Arginine 177 and arginine 231 together coordinate L-aspartate. Carbamoyl phosphate contacts are provided by glycine 272 and proline 273.

The protein belongs to the aspartate/ornithine carbamoyltransferase superfamily. ATCase family. As to quaternary structure, heterododecamer (2C3:3R2) of six catalytic PyrB chains organized as two trimers (C3), and six regulatory PyrI chains organized as three dimers (R2).

The enzyme catalyses carbamoyl phosphate + L-aspartate = N-carbamoyl-L-aspartate + phosphate + H(+). It functions in the pathway pyrimidine metabolism; UMP biosynthesis via de novo pathway; (S)-dihydroorotate from bicarbonate: step 2/3. Its function is as follows. Catalyzes the condensation of carbamoyl phosphate and aspartate to form carbamoyl aspartate and inorganic phosphate, the committed step in the de novo pyrimidine nucleotide biosynthesis pathway. In Nocardia farcinica (strain IFM 10152), this protein is Aspartate carbamoyltransferase catalytic subunit.